A 429-amino-acid chain; its full sequence is Xaa-Pro dipeptidase (429 aa).

Mn(2+)-binding residues include D241, D252, H334, E372, and E411.

Belongs to the peptidase M24B family. Bacterial-type prolidase subfamily. Requires Mn(2+) as cofactor.

It catalyses the reaction Xaa-L-Pro dipeptide + H2O = an L-alpha-amino acid + L-proline. In terms of biological role, splits dipeptides with a prolyl residue in the C-terminal position. The chain is Xaa-Pro dipeptidase from Marinobacter nauticus (strain ATCC 700491 / DSM 11845 / VT8) (Marinobacter aquaeolei).